The sequence spans 118 residues: Large ribosomal subunit protein bL20 (118 aa).

It belongs to the bacterial ribosomal protein bL20 family.

Its function is as follows. Binds directly to 23S ribosomal RNA and is necessary for the in vitro assembly process of the 50S ribosomal subunit. It is not involved in the protein synthesizing functions of that subunit. This is Large ribosomal subunit protein bL20 (rplT) from Thermotoga maritima (strain ATCC 43589 / DSM 3109 / JCM 10099 / NBRC 100826 / MSB8).